Consider the following 841-residue polypeptide: Translation initiation factor IF-2 (841 aa).

5 stretches are compositionally biased toward basic and acidic residues: residues 1–12, 50–92, 114–170, 188–202, and 213–235; these read MSDNEIKNEAPK, EAAL…EATK, EQPK…REEA, READRDNDRRSEANR, and KKGDREDKNERNADRRNQKDVKG. Disordered regions lie at residues 1-24 and 50-246; these read MSDNEIKNEAPKKLSLQRRTKTTV and EAAL…GSAL. The tr-type G domain occupies 340–510; that stretch reads TRAPVVTIMG…LLQSEVLELT (171 aa). Residues 349-356 are G1; that stretch reads GHVDHGKT. 349–356 lines the GTP pocket; the sequence is GHVDHGKT. The interval 374–378 is G2; that stretch reads GITQH. The tract at residues 396–399 is G3; sequence DTPG. Residues 396–400 and 450–453 contribute to the GTP site; these read DTPGH and NKID. Residues 450-453 are G4; the sequence is NKID. The tract at residues 486-488 is G5; that stretch reads SAK.

The protein belongs to the TRAFAC class translation factor GTPase superfamily. Classic translation factor GTPase family. IF-2 subfamily.

The protein resides in the cytoplasm. In terms of biological role, one of the essential components for the initiation of protein synthesis. Protects formylmethionyl-tRNA from spontaneous hydrolysis and promotes its binding to the 30S ribosomal subunits. Also involved in the hydrolysis of GTP during the formation of the 70S ribosomal complex. This Actinobacillus pleuropneumoniae serotype 3 (strain JL03) protein is Translation initiation factor IF-2.